The primary structure comprises 255 residues: MQGQSQQQAYDRGITIFSPDGRLYQVEYAREAVKRGTASIGIRTEDGVVLVVDKRIRSPLMERTSVEKIHKADDHIGIASAGHVADARQLIDFARRQAQVNQLRYDEPIGVETLTKAVTDHIQQYTQVGGARPFGVALIIGGIEDGEPRLYETDPSGTPYEWQALAVGADRGDIQEYLEEHYSESLDTEAGIGLALEALASVNDDSLTPEGIGLATVTVDDDDGFSQLSDEEIEAHLEERDLLEAEDDADEDDEE.

Belongs to the peptidase T1A family. The 20S proteasome core is composed of 14 alpha and 14 beta subunits that assemble into four stacked heptameric rings, resulting in a barrel-shaped structure. The two inner rings, each composed of seven catalytic beta subunits, are sandwiched by two outer rings, each composed of seven alpha subunits. The catalytic chamber with the active sites is on the inside of the barrel. Has a gated structure, the ends of the cylinder being occluded by the N-termini of the alpha-subunits. Is capped at one or both ends by the proteasome regulatory ATPase, PAN.

It localises to the cytoplasm. Its activity is regulated as follows. The formation of the proteasomal ATPase PAN-20S proteasome complex, via the docking of the C-termini of PAN into the intersubunit pockets in the alpha-rings, triggers opening of the gate for substrate entry. Interconversion between the open-gate and close-gate conformations leads to a dynamic regulation of the 20S proteasome proteolysis activity. Functionally, component of the proteasome core, a large protease complex with broad specificity involved in protein degradation. The sequence is that of Proteasome subunit alpha from Natronomonas pharaonis (strain ATCC 35678 / DSM 2160 / CIP 103997 / JCM 8858 / NBRC 14720 / NCIMB 2260 / Gabara) (Halobacterium pharaonis).